The primary structure comprises 291 residues: N-acetylmannosamine kinase (291 aa).

ATP-binding positions include 5 to 12 (AIDIGGTK) and 132 to 139 (GVGGGVVC). 4 residues coordinate Zn(2+): H156, C166, C168, and C173.

This sequence belongs to the ROK (NagC/XylR) family. NanK subfamily. In terms of assembly, homodimer.

The enzyme catalyses an N-acyl-D-mannosamine + ATP = an N-acyl-D-mannosamine 6-phosphate + ADP + H(+). It functions in the pathway amino-sugar metabolism; N-acetylneuraminate degradation; D-fructose 6-phosphate from N-acetylneuraminate: step 2/5. Its function is as follows. Catalyzes the phosphorylation of N-acetylmannosamine (ManNAc) to ManNAc-6-P. This chain is N-acetylmannosamine kinase, found in Salmonella paratyphi B (strain ATCC BAA-1250 / SPB7).